A 721-amino-acid polypeptide reads, in one-letter code: Procollagen-lysine,2-oxoglutarate 5-dioxygenase (721 aa).

Residues 1–21 (MRIQQSALLLLLLAVTSQGDA) form the signal peptide. N-linked (GlcNAc...) asparagine glycosylation is found at N504, N530, and N536. One can recognise a Fe2OG dioxygenase domain in the interval 627–721 (NPPRALMNFM…RYIMISFIDP (95 aa)). Positions 650 and 652 each coordinate Fe cation. A glycan (N-linked (GlcNAc...) asparagine) is linked at N680. H702 provides a ligand contact to Fe cation. A glycan (N-linked (GlcNAc...) asparagine) is linked at N709. R712 serves as a coordination point for 2-oxoglutarate.

The cofactor is L-ascorbate. It depends on Fe(2+) as a cofactor.

The protein localises to the endoplasmic reticulum. Its subcellular location is the secreted. The protein resides in the extracellular space. The catalysed reaction is L-lysyl-[collagen] + 2-oxoglutarate + O2 = (5R)-5-hydroxy-L-lysyl-[collagen] + succinate + CO2. Forms hydroxylysine residues in collagen type IV. Required for the secretion of collagen type IV (vkg) from haemocytes, fat body and follicle cells. This chain is Procollagen-lysine,2-oxoglutarate 5-dioxygenase, found in Drosophila melanogaster (Fruit fly).